Here is a 264-residue protein sequence, read N- to C-terminus: Complement C1q tumor necrosis factor-related protein 6 (264 aa).

The signal sequence occupies residues 1–24 (MRVIMGIASLGFLWAVFLLPLVFG). N-linked (GlcNAc...) asparagine glycosylation is present at N77. The interval 81-125 (LKGDKGDRGPTGTPGKPGKNGTRGDRGSQGVKGDKGQAGSPGSSC) is disordered. Residues 83-124 (GDKGDRGPTGTPGKPGKNGTRGDRGSQGVKGDKGQAGSPGSS) enclose the Collagen-like domain. Residues 90 to 100 (PTGTPGKPGKN) are compositionally biased toward low complexity. The 140-residue stretch at 125 to 264 (CQTHYSAFSV…SGHLIKAEDN (140 aa)) folds into the C1q domain.

The protein resides in the secreted. In Mus musculus (Mouse), this protein is Complement C1q tumor necrosis factor-related protein 6 (C1qtnf6).